A 204-amino-acid chain; its full sequence is Ribonuclease HII (204 aa).

One can recognise an RNase H type-2 domain in the interval Met-1–Leu-197. Asp-6, Glu-7, and Asp-103 together coordinate a divalent metal cation.

Belongs to the RNase HII family. It depends on Mn(2+) as a cofactor. Requires Mg(2+) as cofactor.

Its subcellular location is the cytoplasm. It catalyses the reaction Endonucleolytic cleavage to 5'-phosphomonoester.. Endonuclease that specifically degrades the RNA of RNA-DNA hybrids. This chain is Ribonuclease HII, found in Helicobacter pylori (strain P12).